Reading from the N-terminus, the 122-residue chain is UPF0102 protein CKL_1410 (122 aa).

It belongs to the UPF0102 family.

The protein is UPF0102 protein CKL_1410 of Clostridium kluyveri (strain ATCC 8527 / DSM 555 / NBRC 12016 / NCIMB 10680 / K1).